The sequence spans 243 residues: Phosphoribosylaminoimidazole-succinocarboxamide synthase (243 aa).

It belongs to the SAICAR synthetase family.

It catalyses the reaction 5-amino-1-(5-phospho-D-ribosyl)imidazole-4-carboxylate + L-aspartate + ATP = (2S)-2-[5-amino-1-(5-phospho-beta-D-ribosyl)imidazole-4-carboxamido]succinate + ADP + phosphate + 2 H(+). It participates in purine metabolism; IMP biosynthesis via de novo pathway; 5-amino-1-(5-phospho-D-ribosyl)imidazole-4-carboxamide from 5-amino-1-(5-phospho-D-ribosyl)imidazole-4-carboxylate: step 1/2. The chain is Phosphoribosylaminoimidazole-succinocarboxamide synthase from Thermosynechococcus vestitus (strain NIES-2133 / IAM M-273 / BP-1).